A 327-amino-acid chain; its full sequence is Zinc transport protein ZntB (327 aa).

Over 1–273 (MEAIKGSDVN…ARRTYTMSLM (273 aa)) the chain is Cytoplasmic. A helical membrane pass occupies residues 274–294 (AMVFLPSTFLTGLFGVNLGGI). The Periplasmic portion of the chain corresponds to 295–300 (PGGGWQ). Residues 301-321 (FGFSIFCILLVVLIGGVALWL) traverse the membrane as a helical segment. The Cytoplasmic segment spans residues 322 to 327 (HRSKWL).

Belongs to the CorA metal ion transporter (MIT) (TC 1.A.35) family.

The protein localises to the cell inner membrane. It catalyses the reaction Zn(2+)(out) + H(+)(out) = Zn(2+)(in) + H(+)(in). Its function is as follows. Zinc transporter. Acts as a Zn(2+):proton symporter, which likely mediates zinc ion uptake. This is Zinc transport protein ZntB from Escherichia coli O139:H28 (strain E24377A / ETEC).